Here is an 84-residue protein sequence, read N- to C-terminus: Small ribosomal subunit protein uS17 (84 aa).

The protein belongs to the universal ribosomal protein uS17 family. Part of the 30S ribosomal subunit.

In terms of biological role, one of the primary rRNA binding proteins, it binds specifically to the 5'-end of 16S ribosomal RNA. The protein is Small ribosomal subunit protein uS17 of Clostridioides difficile (strain 630) (Peptoclostridium difficile).